A 453-amino-acid chain; its full sequence is Ribosomal protein uS12 methylthiotransferase RimO (453 aa).

Positions 3–118 (KKVGIISLGC…IAKVIEEFYS (116 aa)) constitute an MTTase N-terminal domain. Residues cysteine 12, cysteine 48, cysteine 81, cysteine 162, cysteine 166, and cysteine 169 each contribute to the [4Fe-4S] cluster site. Residues 148-378 (STNSGYAYLK…MQLQKEIVQR (231 aa)) enclose the Radical SAM core domain. The TRAM domain maps to 381–449 (ESRLEKVYKT…DYDLIGEVIN (69 aa)).

Belongs to the methylthiotransferase family. RimO subfamily. Requires [4Fe-4S] cluster as cofactor.

It is found in the cytoplasm. The enzyme catalyses L-aspartate(89)-[ribosomal protein uS12]-hydrogen + (sulfur carrier)-SH + AH2 + 2 S-adenosyl-L-methionine = 3-methylsulfanyl-L-aspartate(89)-[ribosomal protein uS12]-hydrogen + (sulfur carrier)-H + 5'-deoxyadenosine + L-methionine + A + S-adenosyl-L-homocysteine + 2 H(+). Catalyzes the methylthiolation of an aspartic acid residue of ribosomal protein uS12. The chain is Ribosomal protein uS12 methylthiotransferase RimO from Acetivibrio thermocellus (strain ATCC 27405 / DSM 1237 / JCM 9322 / NBRC 103400 / NCIMB 10682 / NRRL B-4536 / VPI 7372) (Clostridium thermocellum).